The following is a 215-amino-acid chain: Enolase-phosphatase E1 (215 aa).

2 residues coordinate Mg(2+): aspartate 11 and glutamate 13. Substrate is bound by residues 117 to 118 and lysine 151; that span reads SS. Mg(2+) is bound at residue aspartate 174.

It belongs to the HAD-like hydrolase superfamily. MasA/MtnC family. Monomer. Mg(2+) is required as a cofactor.

The protein resides in the cytoplasm. It is found in the nucleus. The catalysed reaction is 5-methylsulfanyl-2,3-dioxopentyl phosphate + H2O = 1,2-dihydroxy-5-(methylsulfanyl)pent-1-en-3-one + phosphate. The protein operates within amino-acid biosynthesis; L-methionine biosynthesis via salvage pathway; L-methionine from S-methyl-5-thio-alpha-D-ribose 1-phosphate: step 3/6. Its pathway is amino-acid biosynthesis; L-methionine biosynthesis via salvage pathway; L-methionine from S-methyl-5-thio-alpha-D-ribose 1-phosphate: step 4/6. Bifunctional enzyme that catalyzes the enolization of 2,3-diketo-5-methylthiopentyl-1-phosphate (DK-MTP-1-P) into the intermediate 2-hydroxy-3-keto-5-methylthiopentenyl-1-phosphate (HK-MTPenyl-1-P), which is then dephosphorylated to form the acireductone 1,2-dihydroxy-3-keto-5-methylthiopentene (DHK-MTPene). In Schizosaccharomyces japonicus (strain yFS275 / FY16936) (Fission yeast), this protein is Enolase-phosphatase E1 (utr4).